The primary structure comprises 222 residues: ATP-dependent dethiobiotin synthetase BioD (222 aa).

12 to 17 (DAGKTV) is an ATP binding site. Threonine 16 contacts Mg(2+). Residue lysine 37 is part of the active site. Serine 41 is a binding site for substrate. ATP-binding positions include aspartate 54, 116–119 (EGAG), 176–177 (VQ), 206–208 (PYL), and glutamate 213. The Mg(2+) site is built by aspartate 54 and glutamate 116.

This sequence belongs to the dethiobiotin synthetase family. As to quaternary structure, homodimer. Requires Mg(2+) as cofactor.

The protein localises to the cytoplasm. The catalysed reaction is (7R,8S)-7,8-diammoniononanoate + CO2 + ATP = (4R,5S)-dethiobiotin + ADP + phosphate + 3 H(+). The protein operates within cofactor biosynthesis; biotin biosynthesis; biotin from 7,8-diaminononanoate: step 1/2. Its function is as follows. Catalyzes a mechanistically unusual reaction, the ATP-dependent insertion of CO2 between the N7 and N8 nitrogen atoms of 7,8-diaminopelargonic acid (DAPA, also called 7,8-diammoniononanoate) to form a ureido ring. This is ATP-dependent dethiobiotin synthetase BioD from Idiomarina loihiensis (strain ATCC BAA-735 / DSM 15497 / L2-TR).